Reading from the N-terminus, the 373-residue chain is GTP cyclohydrolase 1 type 2 homolog (373 aa).

A divalent metal cation-binding residues include His-67, His-68, Asp-106, His-333, and Glu-336.

This sequence belongs to the GTP cyclohydrolase I type 2/NIF3 family. As to quaternary structure, homohexamer.

In Listeria innocua serovar 6a (strain ATCC BAA-680 / CLIP 11262), this protein is GTP cyclohydrolase 1 type 2 homolog.